Reading from the N-terminus, the 650-residue chain is MSEAHVYPVKENIKTHTHADNDTYLAMYQQSVTDPEGFWNEHGKIVDWIKPFTKVKSTSFDTGHVDIRWFEDGTLNVSANCIDRHLAEHGDDVAIIWEGDDPADDKTLTFNELHKEVCKFSNALKDQGVRKGDVVCLYMPMVPEAAIAMLACTRIGAVHTVVFGGFSPEALSGRIIDSDAKVVITADEGVRGGRAVPLKKNVDEALTNPEVKTISKVVVLKRTGGNVDWHGHRDVWWHEATAKVSDVCPPEEMKAEDPLFILYTSGSTGKPKGVLHTTGGYLVYAAMTFKYVFDYQPGETFWCTADVGWITGHTYLIYGPLANGAKTILFEGVPNYPNTSRMSEVVDKHQVNILYTAPTAIRALMAKGNEAVAGTSRSSLRIMGSVGEPINPEAWEWYYKTIGNENSPIVDTWWQTETGGILIAPLPGATDLKPGSATRPFFGVQPALVDNMGNILEDTVAEGNLVILDSWPGQMRTVYGDHERFEQTYFSTFKGMYFTSDGARRDEDGYYWITGRVDDVLNVSGHRMGTAEIESALVAHHKIAEAAIVGIPHDIKGQAIYAYITLNDGEFPSAELHKEVKDWVRKEIGPIATPDVLHWTDSLPKTRSGKIMRRILRKIATGDTSNLGDTSTLADPSVVDKLIAEKAELV.

CoA is bound by residues 191–194, Thr311, and Asn335; that span reads RGGR. ATP contacts are provided by residues 387-389, 411-416, Asp501, and Arg516; these read GEP and DTWWQT. Ser524 contacts CoA. Residue Arg527 coordinates ATP. Val538, His540, and Ile543 together coordinate Mg(2+). Position 585 (Arg585) interacts with CoA. Position 610 is an N6-acetyllysine (Lys610).

This sequence belongs to the ATP-dependent AMP-binding enzyme family. Mg(2+) is required as a cofactor. Post-translationally, acetylated. Deacetylation by the SIR2-homolog deacetylase activates the enzyme.

It carries out the reaction acetate + ATP + CoA = acetyl-CoA + AMP + diphosphate. In terms of biological role, catalyzes the conversion of acetate into acetyl-CoA (AcCoA), an essential intermediate at the junction of anabolic and catabolic pathways. AcsA undergoes a two-step reaction. In the first half reaction, AcsA combines acetate with ATP to form acetyl-adenylate (AcAMP) intermediate. In the second half reaction, it can then transfer the acetyl group from AcAMP to the sulfhydryl group of CoA, forming the product AcCoA. The polypeptide is Acetyl-coenzyme A synthetase (Vibrio parahaemolyticus serotype O3:K6 (strain RIMD 2210633)).